We begin with the raw amino-acid sequence, 284 residues long: Bifunctional protein FolD (284 aa).

NADP(+)-binding positions include 166–168 (GAS) and isoleucine 232.

It belongs to the tetrahydrofolate dehydrogenase/cyclohydrolase family. Homodimer.

The catalysed reaction is (6R)-5,10-methylene-5,6,7,8-tetrahydrofolate + NADP(+) = (6R)-5,10-methenyltetrahydrofolate + NADPH. It carries out the reaction (6R)-5,10-methenyltetrahydrofolate + H2O = (6R)-10-formyltetrahydrofolate + H(+). It functions in the pathway one-carbon metabolism; tetrahydrofolate interconversion. In terms of biological role, catalyzes the oxidation of 5,10-methylenetetrahydrofolate to 5,10-methenyltetrahydrofolate and then the hydrolysis of 5,10-methenyltetrahydrofolate to 10-formyltetrahydrofolate. This chain is Bifunctional protein FolD, found in Shewanella sp. (strain MR-7).